A 271-amino-acid chain; its full sequence is ATP synthase subunit a (271 aa).

The next 5 helical transmembrane spans lie at 31–51, 89–109, 124–144, 186–206, and 216–236; these read WDTILTSVIAGVIVVGLGLYM, FVAPMAVTLFVYILLCNWIGV, DINLTLTLALVVIVPMHIVSL, IFSGAIMVSLLALMPPYVLWL, and LGVGVIQAFIFALLTILYYAF. The tract at residues 247-271 is disordered; it reads DEHADGGDSSSRQASPTPLPAGQVR.

This sequence belongs to the ATPase A chain family. F-type ATPases have 2 components, CF(1) - the catalytic core - and CF(0) - the membrane proton channel. CF(1) has five subunits: alpha(3), beta(3), gamma(1), delta(1), epsilon(1). CF(0) has three main subunits: a(1), b(2) and c(9-12). The alpha and beta chains form an alternating ring which encloses part of the gamma chain. CF(1) is attached to CF(0) by a central stalk formed by the gamma and epsilon chains, while a peripheral stalk is formed by the delta and b chains.

The protein resides in the cell membrane. In terms of biological role, key component of the proton channel; it plays a direct role in the translocation of protons across the membrane. The protein is ATP synthase subunit a of Acidothermus cellulolyticus (strain ATCC 43068 / DSM 8971 / 11B).